Here is a 118-residue protein sequence, read N- to C-terminus: Small ribosomal subunit protein uS13 (118 aa).

A disordered region spans residues 94–118 (GLPVRGQRTKTNARTRKGPRKPIKK).

The protein belongs to the universal ribosomal protein uS13 family. As to quaternary structure, part of the 30S ribosomal subunit. Forms a loose heterodimer with protein S19. Forms two bridges to the 50S subunit in the 70S ribosome.

Located at the top of the head of the 30S subunit, it contacts several helices of the 16S rRNA. In the 70S ribosome it contacts the 23S rRNA (bridge B1a) and protein L5 of the 50S subunit (bridge B1b), connecting the 2 subunits; these bridges are implicated in subunit movement. Contacts the tRNAs in the A and P-sites. In Haemophilus ducreyi (strain 35000HP / ATCC 700724), this protein is Small ribosomal subunit protein uS13.